Here is a 257-residue protein sequence, read N- to C-terminus: Imidazole glycerol phosphate synthase subunit HisF (257 aa).

Active-site residues include D12 and D131.

Belongs to the HisA/HisF family. Heterodimer of HisH and HisF.

The protein resides in the cytoplasm. The enzyme catalyses 5-[(5-phospho-1-deoxy-D-ribulos-1-ylimino)methylamino]-1-(5-phospho-beta-D-ribosyl)imidazole-4-carboxamide + L-glutamine = D-erythro-1-(imidazol-4-yl)glycerol 3-phosphate + 5-amino-1-(5-phospho-beta-D-ribosyl)imidazole-4-carboxamide + L-glutamate + H(+). Its pathway is amino-acid biosynthesis; L-histidine biosynthesis; L-histidine from 5-phospho-alpha-D-ribose 1-diphosphate: step 5/9. Its function is as follows. IGPS catalyzes the conversion of PRFAR and glutamine to IGP, AICAR and glutamate. The HisF subunit catalyzes the cyclization activity that produces IGP and AICAR from PRFAR using the ammonia provided by the HisH subunit. The sequence is that of Imidazole glycerol phosphate synthase subunit HisF from Rhodococcus jostii (strain RHA1).